A 399-amino-acid polypeptide reads, in one-letter code: Secreted RxLR effector protein 36 (399 aa).

A signal peptide spans Met-1–Ala-21. The RxLR-dEER motif lies at Arg-50 to Arg-71. N-linked (GlcNAc...) asparagine glycosylation occurs at Asn-75. The tract at residues Ile-126–Asp-145 is disordered.

The protein belongs to the RxLR effector family.

It localises to the secreted. The protein resides in the host nucleus. In terms of biological role, secreted effector that completely suppresses the host cell death induced by cell death-inducing proteins. The sequence is that of Secreted RxLR effector protein 36 from Plasmopara viticola (Downy mildew of grapevine).